We begin with the raw amino-acid sequence, 355 residues long: Dual-specificity RNA methyltransferase RlmN (355 aa).

The active-site Proton acceptor is Glu86. A Radical SAM core domain is found at 105–338; that stretch reads KEARYTVCVS…CTIRESKGLD (234 aa). Cys112 and Cys343 are oxidised to a cystine. [4Fe-4S] cluster contacts are provided by Cys119, Cys123, and Cys126. S-adenosyl-L-methionine contacts are provided by residues 169–170, Ser201, 224–226, and Asn300; these read GE and SLH. Residue Cys343 is the S-methylcysteine intermediate of the active site.

The protein belongs to the radical SAM superfamily. RlmN family. It depends on [4Fe-4S] cluster as a cofactor.

Its subcellular location is the cytoplasm. It catalyses the reaction adenosine(2503) in 23S rRNA + 2 reduced [2Fe-2S]-[ferredoxin] + 2 S-adenosyl-L-methionine = 2-methyladenosine(2503) in 23S rRNA + 5'-deoxyadenosine + L-methionine + 2 oxidized [2Fe-2S]-[ferredoxin] + S-adenosyl-L-homocysteine. It carries out the reaction adenosine(37) in tRNA + 2 reduced [2Fe-2S]-[ferredoxin] + 2 S-adenosyl-L-methionine = 2-methyladenosine(37) in tRNA + 5'-deoxyadenosine + L-methionine + 2 oxidized [2Fe-2S]-[ferredoxin] + S-adenosyl-L-homocysteine. Its function is as follows. Specifically methylates position 2 of adenine 2503 in 23S rRNA and position 2 of adenine 37 in tRNAs. m2A2503 modification seems to play a crucial role in the proofreading step occurring at the peptidyl transferase center and thus would serve to optimize ribosomal fidelity. The sequence is that of Dual-specificity RNA methyltransferase RlmN from Nitratiruptor sp. (strain SB155-2).